The chain runs to 264 residues: MGGNKRAYYAVARGRNTGIYSTWDEASDQVKGYGGNRYKKFDSYEAAQEFCRTEGSRYSSSSGPYRRSTTSYGYSPYSSSSSNYSARHSDKYRKKISRSYSTEKDIEIFSNDTHEKSIACSDRQVVYADGSSLRNGKKGAVAGCGVFFGNDDPRNISVPLAGEEQTNNRAELQAIILALENTSGDLTIRSDSNYSIKSLTTWLPKWKKNDFKTSNSQPVKNLDLINRASDLMSDRNVSLEYVKGHSTDYGNQQADMLARRGASE.

Positions 55 to 88 (GSRYSSSSGPYRRSTTSYGYSPYSSSSSNYSARH) are disordered. The span at 56–85 (SRYSSSSGPYRRSTTSYGYSPYSSSSSNYS) shows a compositional bias: low complexity. Serine 97 carries the phosphoserine modification. One can recognise an RNase H type-1 domain in the interval 120–263 (CSDRQVVYAD…ADMLARRGAS (144 aa)). Mg(2+) is bound by residues aspartate 129, glutamate 171, aspartate 191, and aspartate 255.

Belongs to the RNase H family. Mg(2+) serves as cofactor.

It catalyses the reaction Endonucleolytic cleavage to 5'-phosphomonoester.. Endonuclease that specifically degrades the RNA of RNA-DNA hybrids. The polypeptide is Ribonuclease H (rnh1) (Schizosaccharomyces pombe (strain 972 / ATCC 24843) (Fission yeast)).